The sequence spans 2197 residues: Protein sickie (2197 aa).

In terms of domain architecture, Calponin-homology (CH) spans 21-129 (RDYAEIYTDW…LFFALSRFKQ (109 aa)). 7 disordered regions span residues 165 to 197 (GLRTPGSSLNQDKNQQEQQQQQQQQQTPQQLAQ), 235 to 311 (CPPD…PQKH), 331 to 646 (AASV…NKFH), 730 to 767 (GSSPGGSRFHDIDNGYLSEGSSGLNGPSSSAGGISPGK), 788 to 910 (RNSR…FGYV), 1094 to 1119 (GPGQMAGQMSGNESPYVQSPRMNRSN), and 1202 to 1223 (TAAGASVLSPTHGTTSAAGLVG). The segment covering 175-197 (QDKNQQEQQQQQQQQQTPQQLAQ) has biased composition (low complexity). A compositionally biased stretch (polar residues) spans 261 to 290 (SDFNTSRPNSPPTSNHTIQSLKSGNNNSLR). The segment covering 291–304 (PPSIKSGIPSPSSP) has biased composition (low complexity). Over residues 331–341 (AASVASKTQIQ) the composition is skewed to polar residues. Composition is skewed to low complexity over residues 342-354 (SKRTSSSSGFSSA) and 379-398 (SVSSQKPQPKTKQSKLLAAQ). Over residues 399–428 (QKKEQANKATKLDKKEKSPARSLNKEESGN) the composition is skewed to basic and acidic residues. Polar residues-rich tracts occupy residues 429-441 (ESRSSTMGRTGKS), 561-570 (ANSQPTSHIS), 577-588 (EPSTPQHSSGIY), and 633-644 (SAPNTPTASPNK). Composition is skewed to low complexity over residues 755–766 (GPSSSAGGISPG), 796–831 (SIGTAANGSSAASQASSSGGSTTTHAQNNNNNNNNN), and 887–904 (SSSKQGSPSSSSRTKGVP). The segment covering 1100–1119 (GQMSGNESPYVQSPRMNRSN) has biased composition (polar residues). Residues 1262–1342 (YGNAEERQAH…RQTIELLRKQ (81 aa)) are a coiled coil. 2 disordered regions span residues 1373-1415 (QALG…SMCS) and 1455-1511 (KTSR…SPAK). 2 stretches are compositionally biased toward polar residues: residues 1379–1399 (GSDQKPPNSGSQRAINANNGS) and 1406–1415 (RQHSTDSMCS). Residues 1455-1468 (KTSRHVGHHHHHNH) show a composition bias toward basic residues. Residues 1556-1591 (SSASQLESLKEMMNKMRAEMMSLKHNNERLQKLVTT) adopt a coiled-coil conformation. 3 disordered regions span residues 1600-1633 (SLGQAISPNGSVAGSSEVSRRYSLADSNSRPPME), 1648-1690 (CLPP…EAAP), and 2172-2197 (SEAQDQESDCASLDSNVTPESSAGAE). Residues 1603-1616 (QAISPNGSVAGSSE) show a composition bias toward polar residues. The span at 1650–1663 (PPAPAPEQPPPPAP) shows a compositional bias: pro residues. Residues 2184-2197 (LDSNVTPESSAGAE) show a composition bias toward polar residues.

It belongs to the Nav/unc-53 family.

Its function is as follows. Required for the immune deficiency pathway, which mediates responses to Gram-negative bacterial infection. Favors Rel activation and nuclear translocation. The sequence is that of Protein sickie (sick) from Drosophila melanogaster (Fruit fly).